We begin with the raw amino-acid sequence, 64 residues long: Large ribosomal subunit protein bL35 (64 aa).

It belongs to the bacterial ribosomal protein bL35 family.

The polypeptide is Large ribosomal subunit protein bL35 (Ectopseudomonas mendocina (strain ymp) (Pseudomonas mendocina)).